Reading from the N-terminus, the 120-residue chain is Large ribosomal subunit protein uL18 (120 aa).

It belongs to the universal ribosomal protein uL18 family. In terms of assembly, part of the 50S ribosomal subunit; part of the 5S rRNA/L5/L18/L25 subcomplex. Contacts the 5S and 23S rRNAs.

Functionally, this is one of the proteins that bind and probably mediate the attachment of the 5S RNA into the large ribosomal subunit, where it forms part of the central protuberance. The polypeptide is Large ribosomal subunit protein uL18 (Geobacillus thermodenitrificans (strain NG80-2)).